Consider the following 104-residue polypeptide: ATP-dependent Clp protease adapter protein ClpS (104 aa).

The protein belongs to the ClpS family. Binds to the N-terminal domain of the chaperone ClpA.

In terms of biological role, involved in the modulation of the specificity of the ClpAP-mediated ATP-dependent protein degradation. In Paraburkholderia xenovorans (strain LB400), this protein is ATP-dependent Clp protease adapter protein ClpS.